The primary structure comprises 274 residues: Nitrogenase iron protein (274 aa).

8-15 (GKGGIGKS) is a binding site for ATP. Cys-94 contacts [4Fe-4S] cluster. An ADP-ribosylarginine; by dinitrogenase reductase ADP-ribosyltransferase modification is found at Arg-97. Cys-131 is a binding site for [4Fe-4S] cluster.

The protein belongs to the NifH/BchL/ChlL family. Homodimer. [4Fe-4S] cluster is required as a cofactor. Post-translationally, the reversible ADP-ribosylation of Arg-97 inactivates the nitrogenase reductase and regulates nitrogenase activity.

The catalysed reaction is N2 + 8 reduced [2Fe-2S]-[ferredoxin] + 16 ATP + 16 H2O = H2 + 8 oxidized [2Fe-2S]-[ferredoxin] + 2 NH4(+) + 16 ADP + 16 phosphate + 6 H(+). In terms of biological role, the key enzymatic reactions in nitrogen fixation are catalyzed by the nitrogenase complex, which has 2 components: the iron protein and the molybdenum-iron protein. This chain is Nitrogenase iron protein, found in Chlorobium phaeobacteroides (strain DSM 266 / SMG 266 / 2430).